Reading from the N-terminus, the 511-residue chain is Rab proteins geranylgeranyltransferase component A (511 aa).

It belongs to the Rab GDI family.

Its subcellular location is the cytoplasm. The protein resides in the perinuclear region. The protein localises to the cytoskeleton. It localises to the spindle pole. Its function is as follows. Binds unprenylated Rab proteins, presents it to the catalytic component B, and remains bound to it after the geranylgeranyl transfer reaction. The component A is thought to be regenerated by transferring its prenylated Rab to a protein acceptor. In Drosophila melanogaster (Fruit fly), this protein is Rab proteins geranylgeranyltransferase component A.